The primary structure comprises 802 residues: Cullin-4 (802 aa).

2 stretches are compositionally biased toward low complexity: residues 1–33 (MNFN…NNNN) and 656–676 (STSS…ASGS). 2 disordered regions span residues 1 to 43 (MNFN…SLAG) and 656 to 686 (STSS…GGAT). The Cullin neddylation domain maps to 734 to 794 (DRQYQVDAAI…KEYLCRDPEN (61 aa)). Residue Lys-748 forms a Glycyl lysine isopeptide (Lys-Gly) (interchain with G-Cter in NEDD8) linkage.

The protein belongs to the cullin family. Neddylated. Deneddylated via its interaction with the COP9 signalosome (CSN) complex.

The protein operates within protein modification; protein ubiquitination. Functionally, probable core component of cullin-based SCF-like E3 ubiquitin-protein ligase complexes which mediate the ubiquitination and subsequent proteasomal degradation of target proteins. The E3 ubiquitin-protein ligase activity of the complex is dependent on the neddylation of the cullin subunit. This chain is Cullin-4 (culD), found in Dictyostelium discoideum (Social amoeba).